Here is a 517-residue protein sequence, read N- to C-terminus: Protein disulfide-isomerase A5 (517 aa).

The first 21 residues, 1-21 (MARAWGLLLAIGVILPTWLSS), serve as a signal peptide directing secretion. 4 disulfide bridges follow: cysteine 83-cysteine 92, cysteine 180-cysteine 183, cysteine 303-cysteine 306, and cysteine 424-cysteine 427. Thioredoxin domains lie at 132-259 (FLKD…NPQP), 268-382 (PWAD…NPEA), and 376-504 (WMQN…TLRE). The Prevents secretion from ER motif lies at 514 to 517 (REDL).

Belongs to the protein disulfide isomerase family.

It localises to the endoplasmic reticulum lumen. The catalysed reaction is Catalyzes the rearrangement of -S-S- bonds in proteins.. In Rattus norvegicus (Rat), this protein is Protein disulfide-isomerase A5 (Pdia5).